Consider the following 21-residue polypeptide: Scolopendra 7997.01 Da toxin (21 aa).

Expressed by the venom gland.

It is found in the secreted. This Scolopendra viridicornis nigra (Brazilian giant centipede) protein is Scolopendra 7997.01 Da toxin.